Consider the following 185-residue polypeptide: 3-hexulose-6-phosphate isomerase (185 aa).

An SIS domain is found at 29 to 172; the sequence is LADHILSSHQ…ILKLMEKKGL (144 aa). Residues Ser47 and 86-91 contribute to the substrate site; that span reads SGSGET. The active-site Proton acceptor is Glu152.

This sequence belongs to the SIS family. PHI subfamily. In terms of assembly, homotetramer.

It catalyses the reaction D-arabino-hex-3-ulose 6-phosphate = beta-D-fructose 6-phosphate. It participates in one-carbon metabolism; formaldehyde assimilation via RuMP pathway; D-fructose 6-phosphate from D-ribulose 5-phosphate and formaldehyde: step 2/2. In terms of biological role, catalyzes the isomerization between 3-hexulose 6-phosphate and fructose 6-phosphate. Together with HxlA, may act as a formaldehyde detoxification system. The sequence is that of 3-hexulose-6-phosphate isomerase (hxlB) from Bacillus subtilis (strain 168).